Here is a 347-residue protein sequence, read N- to C-terminus: Merozoite surface protein P12 (347 aa).

The segment at residues Met1 to Cys23 is a signal peptide (or 25). 6-Cys domains follow at residues Lys27–Leu172 and Lys175–Ser305. N-linked (GlcNAc...) asparagine glycosylation is present at Asn28. 3 cysteine pairs are disulfide-bonded: Cys31–Cys53, Cys67–Cys138, and Cys81–Cys136. Residues Asn147, Asn200, Asn228, Asn242, Asn265, and Asn322 are each glycosylated (N-linked (GlcNAc...) asparagine). Intrachain disulfides connect Cys179–Cys211, Cys225–Cys286, and Cys236–Cys284. A lipid anchor (GPI-anchor amidated asparagine) is attached at Asn322. The propeptide at Ser323–Leu347 is removed in mature form.

Heterodimer; heterodimerizes with PF41. May form an antiparallel heterodimer with PF41.

The protein resides in the cell surface. It localises to the cell membrane. The sequence is that of Merozoite surface protein P12 (PF12) from Plasmodium falciparum.